The sequence spans 495 residues: 3-octaprenyl-4-hydroxybenzoate carboxy-lyase (495 aa).

N172 lines the Mn(2+) pocket. Prenylated FMN contacts are provided by residues 175–177, 189–191, and 194–195; these read IYR, RWL, and RG. E238 lines the Mn(2+) pocket. D287 functions as the Proton donor in the catalytic mechanism.

The protein belongs to the UbiD family. In terms of assembly, homohexamer. Prenylated FMN serves as cofactor. Requires Mn(2+) as cofactor.

It localises to the cell membrane. The enzyme catalyses a 4-hydroxy-3-(all-trans-polyprenyl)benzoate + H(+) = a 2-(all-trans-polyprenyl)phenol + CO2. It functions in the pathway cofactor biosynthesis; ubiquinone biosynthesis. Its function is as follows. Catalyzes the decarboxylation of 3-octaprenyl-4-hydroxy benzoate to 2-octaprenylphenol, an intermediate step in ubiquinone biosynthesis. This is 3-octaprenyl-4-hydroxybenzoate carboxy-lyase from Yersinia pestis bv. Antiqua (strain Angola).